The sequence spans 610 residues: Preterminal protein (610 aa).

A disordered region spans residues 288–379 (TLRSGTQTGL…ESFSDDVGLS (92 aa)). Residues 328–337 (SLPIRRRRRR) carry the Nuclear localization signal motif. Over residues 331 to 340 (IRRRRRRGTR) the composition is skewed to basic residues. Residues 341-350 (RQVEREDSVR) show a composition bias toward basic and acidic residues. At Ser-549 the chain carries O-(5'-phospho-DNA)-serine.

It belongs to the adenoviridae terminal protein family. As to quaternary structure, heterodimer with the polymerase; this heterodimer binds to bp 9 to 18 of the genome. Interacts with host POU2F1; POU2F1 binds to the auxiliary sequences in the inverted terminal repeats and tethers the pTP-POL heterodimer to the origin DNA thereby participating in the assembly of the pre-initiation complex (POL-TP-DBP-NFIA-POU2F1). In terms of processing, preterminal protein is used to replicate viral genome, upon genomic encapsidation it is processed first into iTP and finally into TP by adenovirus protease.

The protein resides in the host nucleus matrix. Functionally, protein covalently bound to the viral DNA that acts as a primer for viral genomic replication by DNA strand displacement. Assembles on the viral origin of replication in an initiation complex with viral polymerase, DBP, host NFIA and host POU2F1/OCT1. During initiation, the polymerase covalently couples the first dCTP with Ser-580 of pTP. The terminal protein stimulates the template activity over 20 fold compared to protein-free templates. Neo-synthesized viral genomes are linked to two preterminal proteins, one for each 5' end. These new genomes are encapsidated in the nucleus, and during capsid maturation by viral protease, preterminal protein is first cleaved into intermediary (iTP), then into mature TP. May play a role in host nuclear matrix localization of genomic DNA. The chain is Preterminal protein from Snake adenovirus serotype 1 (SnAdV-1).